Reading from the N-terminus, the 365-residue chain is Eukaryotic translation initiation factor 3 subunit H (365 aa).

The 150-residue stretch at 11–160 folds into the MPN domain; the sequence is VKVEALVVMK…LRAFRLSPKF (150 aa).

Belongs to the eIF-3 subunit H family. Component of the eukaryotic translation initiation factor 3 (eIF-3) complex.

It is found in the cytoplasm. In terms of biological role, component of the eukaryotic translation initiation factor 3 (eIF-3) complex, which is involved in protein synthesis of a specialized repertoire of mRNAs and, together with other initiation factors, stimulates binding of mRNA and methionyl-tRNAi to the 40S ribosome. The eIF-3 complex specifically targets and initiates translation of a subset of mRNAs involved in cell proliferation. In Aspergillus clavatus (strain ATCC 1007 / CBS 513.65 / DSM 816 / NCTC 3887 / NRRL 1 / QM 1276 / 107), this protein is Eukaryotic translation initiation factor 3 subunit H.